We begin with the raw amino-acid sequence, 1790 residues long: Non-reducing polyketide synthase gsfA (1790 aa).

An N-terminal acylcarrier protein transacylase domain (SAT) region spans residues 20–263 (GDQRTLFRKL…AMRKIQGMWH (244 aa)). In terms of domain architecture, Ketosynthase family 3 (KS3) spans 392-822 (SSKIAVVGMS…GGNTAMIIEE (431 aa)). Residues Cys-563, His-698, and His-741 each act as for beta-ketoacyl synthase activity in the active site. The segment at 922–1223 (FAFAGQGTFY…CSTLHRDSDN (302 aa)) is malonyl-CoA:ACP transacylase (MAT) domain. Positions 1298–1615 (TSSIHRLYSE…PRIMLNRFFQ (318 aa)) are product template (PT) domain. Positions 1302-1435 (HRLYSENYDS…AYYEDPSTWL (134 aa)) are N-terminal hotdog fold. A PKS/mFAS DH domain is found at 1302-1611 (HRLYSENYDS…FRQWPRIMLN (310 aa)). His-1334 acts as the Proton acceptor; for dehydratase activity in catalysis. The segment at 1460-1611 (MANKLTTSLA…FRQWPRIMLN (152 aa)) is C-terminal hotdog fold. Residue Asp-1518 is the Proton donor; for dehydratase activity of the active site. 2 disordered regions span residues 1621–1648 (PPAP…EKTT) and 1686–1718 (LDYS…ADGA). Basic and acidic residues predominate over residues 1699–1708 (SDERIEKTDS). The Carrier domain occupies 1716 to 1790 (DGANDVTSRA…TIGDLKKLLS (75 aa)). Ser-1753 bears the O-(pantetheine 4'-phosphoryl)serine mark.

The catalysed reaction is 6 malonyl-CoA + acetyl-CoA + 4 H(+) = 2-(2,4-dihydroxy-6-oxidobenzoyl)-5-hydroxy-3-methylbenzenolate + 6 CO2 + 7 CoA + H2O. The protein operates within secondary metabolite biosynthesis; terpenoid biosynthesis. Its function is as follows. Norlichexanthone synthase; part of the gene cluster that mediates the biosynthesis of griseofulvin, an important antifungal drug that has been in use for a long time for treating dermatophyte infections. The first step of the pathway is the formation of the heptaketide backbone by gsfA which is initiated by priming with acetyl-CoA, followed by sequential condensations of 6 malonyl-CoA units. The resulting benzophenone can undergo a spontaneous dehydration to form norlichexanthone. However, the true precursor for the griseofulvin biosynthesis is not norlichexanthone, but the heptaketide benzophenone that is O-methylated at 3-OH by gsfB to produce griseophenone D which is further methylated at 9-OH by gsfC to yield griseophenone C. Griseophenone C is then substrate of halogenase gsfI which is responsible for the regio-specific chlorination at the C13 position to form griseophenone B. The cytochrome P450 gsfF catalyzes the coupling of orcinol and phloroglucinol rings in griseophenone B to form desmethyl-dehydrogriseofulvin A which is further methylated at 5-OH by gsfD to yield dehydrogriseofulvin. Finally, gsfE performs stereospecific reduction of enone 18 of dehydrogriseofulvin to afford the final product griseofulvin. This Penicillium aethiopicum protein is Non-reducing polyketide synthase gsfA.